Consider the following 328-residue polypeptide: DNA-directed RNA polymerase subunit alpha (328 aa).

Residues 1-233 form an alpha N-terminal domain (alpha-NTD) region; sequence MHNSATEFLK…EQLEAFIDLR (233 aa). Residues 247 to 328 are alpha C-terminal domain (alpha-CTD); that stretch reads FDPVLLRPVD…WPPVSILKND (82 aa).

It belongs to the RNA polymerase alpha chain family. As to quaternary structure, homodimer. The RNAP catalytic core consists of 2 alpha, 1 beta, 1 beta' and 1 omega subunit. When a sigma factor is associated with the core the holoenzyme is formed, which can initiate transcription.

It carries out the reaction RNA(n) + a ribonucleoside 5'-triphosphate = RNA(n+1) + diphosphate. In terms of biological role, DNA-dependent RNA polymerase catalyzes the transcription of DNA into RNA using the four ribonucleoside triphosphates as substrates. The chain is DNA-directed RNA polymerase subunit alpha from Wigglesworthia glossinidia brevipalpis.